The sequence spans 738 residues: Ethylene receptor (738 aa).

Transmembrane regions (helical) follow at residues 23-43 (ISDF…IYFV), 54-74 (VLVQ…INLW), and 89-109 (IAKV…VHII). Cu cation is bound by residues cysteine 65 and histidine 69. Residues 158-307 (DRHTILRTTL…VVADQVAVAL (150 aa)) enclose the GAF domain. The Histidine kinase domain maps to 350–589 (VMNHEMRTPM…IFIVKLGIPE (240 aa)). A Phosphohistidine; by autocatalysis modification is found at histidine 353. The 116-residue stretch at 615 to 730 (KVLLMDDNGV…KMRSVLSDLL (116 aa)) folds into the Response regulatory domain. The residue at position 663 (aspartate 663) is a 4-aspartylphosphate.

The protein belongs to the ethylene receptor family. In terms of assembly, homodimer; disulfide-linked. It depends on Cu cation as a cofactor. Activation probably requires a transfer of a phosphate group between a His in the transmitter domain and an Asp of the receiver domain. As to expression, higher expression in arils than in seeds.

The protein localises to the endoplasmic reticulum membrane. It catalyses the reaction ATP + protein L-histidine = ADP + protein N-phospho-L-histidine.. Functionally, may act early in the ethylene signal transduction pathway, possibly as an ethylene receptor, or as a regulator of the pathway. In Passiflora edulis (Passion fruit), this protein is Ethylene receptor (ETR1).